The chain runs to 102 residues: Large ribosomal subunit protein uL24 (102 aa).

The protein belongs to the universal ribosomal protein uL24 family. As to quaternary structure, part of the 50S ribosomal subunit.

Its function is as follows. One of two assembly initiator proteins, it binds directly to the 5'-end of the 23S rRNA, where it nucleates assembly of the 50S subunit. In terms of biological role, one of the proteins that surrounds the polypeptide exit tunnel on the outside of the subunit. This chain is Large ribosomal subunit protein uL24, found in Burkholderia mallei (strain NCTC 10229).